The chain runs to 291 residues: Ribosomal RNA small subunit methyltransferase H (291 aa).

S-adenosyl-L-methionine contacts are provided by residues Gly31–His33, Asp50, Phe77, Asp98, and Gln105.

The protein belongs to the methyltransferase superfamily. RsmH family.

The protein resides in the cytoplasm. The enzyme catalyses cytidine(1402) in 16S rRNA + S-adenosyl-L-methionine = N(4)-methylcytidine(1402) in 16S rRNA + S-adenosyl-L-homocysteine + H(+). Specifically methylates the N4 position of cytidine in position 1402 (C1402) of 16S rRNA. The polypeptide is Ribosomal RNA small subunit methyltransferase H (Endomicrobium trichonymphae).